The sequence spans 782 residues: cGMP-specific 3',5'-cyclic phosphodiesterase gamma (782 aa).

Residues 1–69 (MKHMFKNILF…LCDNMYSKKY (69 aa)) are Cytoplasmic-facing. The chain crosses the membrane as a helical span at residues 70–90 (VILVSHLISLLLMYSVCLIVG). Over 91-97 (NINDLFS) the chain is Extracellular. Residues 98–118 (VLKLTYILLHTFTAINIILIL) form a helical membrane-spanning segment. Topologically, residues 119-135 (TLHATHYVEMFKSIKGE) are cytoplasmic. The helical transmembrane segment at 136–156 (IFIFYIMMIFVIWCSWLFILF) threads the bilayer. The Extracellular portion of the chain corresponds to 157–181 (NNIKDLLPIVVNVNNFLYATYANNK). Residues 182 to 202 (INIVLGFFAYLPIFYLITIIP) form a helical membrane-spanning segment. Residues 203–208 (CRICYS) lie on the Cytoplasmic side of the membrane. A helical membrane pass occupies residues 209–229 (CAFDILFFIMKVAIFSVYYLI). At 230 to 239 (TMKSYILTDN) the chain is on the extracellular side. The helical transmembrane segment at 240 to 260 (IFMIISALVGSLFIFVIRYII) threads the bilayer. Over 261–782 (EIQRRLSFHN…YAPNLNIYKL (522 aa)) the chain is Cytoplasmic. The interval 376 to 396 (GSKEEPEAESESECVDESKEG) is disordered. A compositionally biased stretch (acidic residues) spans 381–390 (PEAESESECV). Residues 423 to 751 (YEEKENEILK…SKWTKIEKDE (329 aa)) form the PDEase domain. H504 acts as the Proton donor in catalysis. 504–508 (HNSIH) lines the a nucleoside 3',5'-cyclic phosphate pocket. H508, H544, D545, and D654 together coordinate a divalent metal cation. D545, D654, and Q706 together coordinate a nucleoside 3',5'-cyclic phosphate.

Belongs to the cyclic nucleotide phosphodiesterase family. Requires a divalent metal cation as cofactor.

The protein resides in the membrane. The protein localises to the endoplasmic reticulum membrane. It carries out the reaction 3',5'-cyclic GMP + H2O = GMP + H(+). The protein operates within purine metabolism; 3',5'-cyclic GMP degradation; GMP from 3',5'-cyclic GMP: step 1/1. Specifically hydrolyzes the second messenger cGMP, which is a key regulator of many important physiological processes. Probably by regulating cGMP levels, required for sporozoite motility and invasion of the mosquito salivary glands. The polypeptide is cGMP-specific 3',5'-cyclic phosphodiesterase gamma (Plasmodium yoelii).